The sequence spans 683 residues: Leishmanolysin-like peptidase (683 aa).

His257 contacts Zn(2+). Glu258 is a catalytic residue. Zn(2+) contacts are provided by His261 and His364.

The protein belongs to the peptidase M8 family. Zn(2+) serves as cofactor.

The protein resides in the cytoplasm. Functionally, essential for the coordination of mitotic progression, and also plays a role in cell migration. This is Leishmanolysin-like peptidase (Invadolysin) from Drosophila melanogaster (Fruit fly).